We begin with the raw amino-acid sequence, 272 residues long: Iodotyrosine deiodinase (272 aa).

Residues 5–25 (LSGVSYGLLAGILAMLIHLVY) form a helical membrane-spanning segment. Residues 82–86 (RRSVR), Ser110, and 110–111 (SG) each bind FMN. Positions 112, 139, 143, and 164 each coordinate 3-iodo-L-tyrosine. FMN contacts are provided by residues 219-221 (TST) and Arg261.

The protein belongs to the nitroreductase family. FMN serves as cofactor.

It localises to the membrane. The catalysed reaction is 2 iodide + L-tyrosine + 2 NADP(+) = 3,5-diiodo-L-tyrosine + 2 NADPH + H(+). The enzyme catalyses iodide + L-tyrosine + NADP(+) = 3-iodo-L-tyrosine + NADPH. It catalyses the reaction 3-iodo-L-tyrosine + iodide + NADP(+) = 3,5-diiodo-L-tyrosine + NADPH + H(+). It carries out the reaction L-tyrosine + chloride + NADP(+) = 3-chloro-L-tyrosine + NADPH. The catalysed reaction is bromide + L-tyrosine + NADP(+) = 3-bromo-L-tyrosine + NADPH. Catalyzes the dehalogenation of halotyrosines such as 3,5-diiodo-L-tyrosine. Likely to also catalyze the dehalogenation of other halotyrosines such as 3-bromo-L-tyrosine, 3-chloro-L-tyrosine and 3-iodo-L-tyrosine. This Hydra vulgaris (Hydra) protein is Iodotyrosine deiodinase.